We begin with the raw amino-acid sequence, 226 residues long: Phosphatidylserine decarboxylase proenzyme (226 aa).

Residue serine 184 is the Schiff-base intermediate with substrate; via pyruvic acid of the active site. Serine 184 bears the Pyruvic acid (Ser); by autocatalysis mark.

The protein belongs to the phosphatidylserine decarboxylase family. PSD-A subfamily. Heterodimer of a large membrane-associated beta subunit and a small pyruvoyl-containing alpha subunit. It depends on pyruvate as a cofactor. In terms of processing, is synthesized initially as an inactive proenzyme. Formation of the active enzyme involves a self-maturation process in which the active site pyruvoyl group is generated from an internal serine residue via an autocatalytic post-translational modification. Two non-identical subunits are generated from the proenzyme in this reaction, and the pyruvate is formed at the N-terminus of the alpha chain, which is derived from the carboxyl end of the proenzyme. The post-translation cleavage follows an unusual pathway, termed non-hydrolytic serinolysis, in which the side chain hydroxyl group of the serine supplies its oxygen atom to form the C-terminus of the beta chain, while the remainder of the serine residue undergoes an oxidative deamination to produce ammonia and the pyruvoyl prosthetic group on the alpha chain.

The protein localises to the cell membrane. It carries out the reaction a 1,2-diacyl-sn-glycero-3-phospho-L-serine + H(+) = a 1,2-diacyl-sn-glycero-3-phosphoethanolamine + CO2. It functions in the pathway phospholipid metabolism; phosphatidylethanolamine biosynthesis; phosphatidylethanolamine from CDP-diacylglycerol: step 2/2. Catalyzes the formation of phosphatidylethanolamine (PtdEtn) from phosphatidylserine (PtdSer). This chain is Phosphatidylserine decarboxylase proenzyme, found in Ehrlichia chaffeensis (strain ATCC CRL-10679 / Arkansas).